A 1025-amino-acid chain; its full sequence is Multidrug resistance protein MdtC (1025 aa).

12 helical membrane-spanning segments follow: residues 3-23 (FFAL…AITL), 333-353 (EVEQ…FLFL), 360-380 (IIPA…MYLC), 387-407 (LSLM…IVVL), 431-451 (VGFT…PLLL), 463-483 (FAVT…TLTP), 528-548 (LVGV…ISIP), 853-873 (VILI…LYES), 875-895 (VHPL…LLAL), 897-917 (LFNA…IGIV), 953-973 (PIMM…LSGG), and 984-1004 (ITIV…TPVV).

Belongs to the resistance-nodulation-cell division (RND) (TC 2.A.6) family. MdtC subfamily. Part of a tripartite efflux system composed of MdtA, MdtB and MdtC. MdtC forms a heteromultimer with MdtB.

It is found in the cell inner membrane. Functionally, the MdtABC tripartite complex confers resistance against novobiocin and deoxycholate. This chain is Multidrug resistance protein MdtC, found in Escherichia coli O17:K52:H18 (strain UMN026 / ExPEC).